The chain runs to 527 residues: Glucose-6-phosphate isomerase (527 aa).

Glu-323 acts as the Proton donor in catalysis. Residues His-352 and Lys-454 contribute to the active site.

It belongs to the GPI family.

The protein resides in the cytoplasm. It catalyses the reaction alpha-D-glucose 6-phosphate = beta-D-fructose 6-phosphate. The protein operates within carbohydrate biosynthesis; gluconeogenesis. Its pathway is carbohydrate degradation; glycolysis; D-glyceraldehyde 3-phosphate and glycerone phosphate from D-glucose: step 2/4. Catalyzes the reversible isomerization of glucose-6-phosphate to fructose-6-phosphate. This chain is Glucose-6-phosphate isomerase, found in Prochlorococcus marinus (strain MIT 9515).